Reading from the N-terminus, the 264-residue chain is Glutamate racemase (264 aa).

Substrate-binding positions include 12-13 (DS) and 44-45 (YG). Cys76 serves as the catalytic Proton donor/acceptor. A substrate-binding site is contributed by 77–78 (NT). The Proton donor/acceptor role is filled by Cys186. Substrate is bound at residue 187-188 (TH).

The protein belongs to the aspartate/glutamate racemases family.

The enzyme catalyses L-glutamate = D-glutamate. It functions in the pathway cell wall biogenesis; peptidoglycan biosynthesis. Its function is as follows. Provides the (R)-glutamate required for cell wall biosynthesis. The protein is Glutamate racemase of Fusobacterium nucleatum subsp. nucleatum (strain ATCC 25586 / DSM 15643 / BCRC 10681 / CIP 101130 / JCM 8532 / KCTC 2640 / LMG 13131 / VPI 4355).